A 690-amino-acid chain; its full sequence is Ectopic P granules protein 2 (690 aa).

Coiled coils occupy residues 20-181, 359-409, 458-494, and 560-643; these read IELA…EREV, ELLR…TIQE, LESG…SLLL, and ATIE…ETKR. The short motif at 61-64 is the LIR 1 element; the sequence is YSTL. A required for interaction with lgg-1 region spans residues 381 to 385; that stretch reads DFKIL. Residues 666–690 are disordered; the sequence is EELDEEPKASTESEEKAEWEMVDEE. The span at 671-684 shows a compositional bias: basic and acidic residues; it reads EPKASTESEEKAEW. Residues 684 to 687 carry the LIR 2 motif; that stretch reads WEMV.

Interacts with sepa-1. Interacts (via the LIR motifs) with lgg-1 and lgg-2. Shows strong interaction with lgg-1 and weak interaction with lgg-2.

It is found in the cytoplasm. Its function is as follows. Involved in autophagy. Thought to act as an adapter protein that brings PGL granules to autophagic structures containing lgg-1. Association with other adapters such as sepa-1 is required for the accumulation and degradation of germ cell specific P-granules by autophagy in somatic cells. This ensures exclusive localization of the P-granules in germ cells. May also play a role in the removal of sepa-1 from somatic cells. The sequence is that of Ectopic P granules protein 2 from Caenorhabditis elegans.